We begin with the raw amino-acid sequence, 123 residues long: Holo-[acyl-carrier-protein] synthase (123 aa).

Mg(2+)-binding residues include D9 and E57.

The protein belongs to the P-Pant transferase superfamily. AcpS family. Requires Mg(2+) as cofactor.

It is found in the cytoplasm. It carries out the reaction apo-[ACP] + CoA = holo-[ACP] + adenosine 3',5'-bisphosphate + H(+). In terms of biological role, transfers the 4'-phosphopantetheine moiety from coenzyme A to a Ser of acyl-carrier-protein. This chain is Holo-[acyl-carrier-protein] synthase, found in Streptomyces avermitilis (strain ATCC 31267 / DSM 46492 / JCM 5070 / NBRC 14893 / NCIMB 12804 / NRRL 8165 / MA-4680).